The sequence spans 453 residues: Serine/threonine-protein phosphatase 2A regulatory subunit B'' subunit gamma (453 aa).

EF-hand domains are found at residues 273–308 (PSAL…TMTN) and 341–376 (KEPA…IQEL). Positions 286, 288, 290, 292, and 297 each coordinate Ca(2+).

As to quaternary structure, interacts with MCM3AP/GANP, PPP5C, and the phosphatase 2A core enzyme composed of the PPP2CA catalytic subunit and the constant regulatory subunit PPP2R1A. Finds in a complex with ABCB1, TFPI2 and PPP2R3C; leading to the dephosphorylation of ABCB1. In terms of tissue distribution, expressed in all tissues tested including heart, brain, spleen, thymus, lung, liver, kidney and testis.

It localises to the nucleus. Its subcellular location is the cytoplasm. Functionally, may regulate MCM3AP phosphorylation through phosphatase recruitment. May act as a negative regulator of ABCB1 expression and function through the dephosphorylation of ABCB1 by TFPI2/PPP2R3C complex. May play a role in the activation-induced cell death of B-cells. The sequence is that of Serine/threonine-protein phosphatase 2A regulatory subunit B'' subunit gamma (Ppp2r3c) from Mus musculus (Mouse).